Here is a 125-residue protein sequence, read N- to C-terminus: Calcitonin gene-related peptide 1 (125 aa).

An N-terminal signal peptide occupies residues 1-25 (MVMLKISSFLAVYALVVCQMDSFQA). Residues 26-77 (APVRPGLESITDRVTLSDYEARRLLNALVKDFIQMTAEELEQASEGNSVTAQ) constitute a propeptide that is removed on maturation. C81 and C86 are disulfide-bonded. F116 is modified (phenylalanine amide). Residues 122 to 125 (SVQI) constitute a propeptide that is removed on maturation.

Belongs to the calcitonin family.

It localises to the secreted. Functionally, CGRP1/CALCA is a peptide hormone that induces vasodilation mediated by the CALCRL-RAMP1 receptor complex. Dilates a variety of vessels including the coronary, cerebral and systemic vasculature. Its abundance in the CNS also points toward a neurotransmitter or neuromodulator role. It also elevates platelet cAMP. CGRP1 can also bind and activate CALCR-RAMP1 (AMYR1) receptor complex. This Gallus gallus (Chicken) protein is Calcitonin gene-related peptide 1 (CALCA).